The primary structure comprises 283 residues: Shikimate dehydrogenase (NADP(+)) (283 aa).

Residues 22 to 24 (SRS) and threonine 69 each bind shikimate. The Proton acceptor role is filled by lysine 73. Shikimate-binding residues include asparagine 93 and aspartate 108. NADP(+)-binding positions include 133 to 137 (GAGGS) and leucine 222. Tyrosine 224 contacts shikimate. Glycine 245 is an NADP(+) binding site.

It belongs to the shikimate dehydrogenase family. As to quaternary structure, homodimer.

It carries out the reaction shikimate + NADP(+) = 3-dehydroshikimate + NADPH + H(+). It functions in the pathway metabolic intermediate biosynthesis; chorismate biosynthesis; chorismate from D-erythrose 4-phosphate and phosphoenolpyruvate: step 4/7. In terms of biological role, involved in the biosynthesis of the chorismate, which leads to the biosynthesis of aromatic amino acids. Catalyzes the reversible NADPH linked reduction of 3-dehydroshikimate (DHSA) to yield shikimate (SA). The chain is Shikimate dehydrogenase (NADP(+)) from Rhodopseudomonas palustris (strain BisB5).